Reading from the N-terminus, the 341-residue chain is Anthranilate phosphoribosyltransferase (341 aa).

5-phospho-alpha-D-ribose 1-diphosphate-binding positions include glycine 85, 88-89, threonine 93, 95-98, 113-121, and serine 125; these read GD, NIST, and KHGNRSASG. Position 85 (glycine 85) interacts with anthranilate. Serine 97 provides a ligand contact to Mg(2+). Position 116 (asparagine 116) interacts with anthranilate. Residue arginine 171 coordinates anthranilate. The Mg(2+) site is built by aspartate 230 and glutamate 231.

Belongs to the anthranilate phosphoribosyltransferase family. In terms of assembly, homodimer. Requires Mg(2+) as cofactor.

It carries out the reaction N-(5-phospho-beta-D-ribosyl)anthranilate + diphosphate = 5-phospho-alpha-D-ribose 1-diphosphate + anthranilate. It participates in amino-acid biosynthesis; L-tryptophan biosynthesis; L-tryptophan from chorismate: step 2/5. In terms of biological role, catalyzes the transfer of the phosphoribosyl group of 5-phosphorylribose-1-pyrophosphate (PRPP) to anthranilate to yield N-(5'-phosphoribosyl)-anthranilate (PRA). The sequence is that of Anthranilate phosphoribosyltransferase from Prochlorococcus marinus (strain SARG / CCMP1375 / SS120).